Reading from the N-terminus, the 474-residue chain is MVLLPPSLPVCQLKVTAPEFPSNFYLDGDHSGFVGIETRQNPHPSASRNPYGHDAGVTDFLSNVSRFQIIESTLREGEQFANAFFDTAKKIEIAKALDDFGVDYIELTSPCASEQSRADCEAICKLGLKAKILTHIRCHMDDARIAVETGVDGVDVVIGTSSYLREHSHGKDMTYIKNAAIEVIEFVKSKGIEIRFSSEDSFRSDLVDLLSIYSAVDKVGVNRVGIADTVGCASPRQVYELVRVLRGVVGCDIETHFHNDTGCAIANAFCALEAGATHIDTSVLGIGERNGITPLGGLMARMMVADREYVKSKYKLEKLKEIEDLVAEAVEVNIPFNNYITGFCAFTHKAGIHAKAILNNPSTYEIINPADFGMSRYVHFASRLTGWNAIKSRAQQLKLEMTDTQYKECTAKIKAMADIRPIAVDDADSIIRAYHRNLKSGENKPLLDLTAEEQAAFAAKEKELLEAQAAGLPV.

The Pyruvate carboxyltransferase domain maps to 67–320; it reads FQIIESTLRE…KSKYKLEKLK (254 aa). Arg-75 is a 2-oxoglutarate binding site. A Mg(2+)-binding site is contributed by Glu-76. His-135, Arg-195, and Thr-229 together coordinate 2-oxoglutarate. Mg(2+)-binding residues include His-256 and His-258. The Proton acceptor role is filled by His-353.

It belongs to the alpha-IPM synthase/homocitrate synthase family. Homocitrate synthase LYS20/LYS21 subfamily. Mg(2+) serves as cofactor. It depends on Mn(2+) as a cofactor.

The protein localises to the mitochondrion. The enzyme catalyses acetyl-CoA + 2-oxoglutarate + H2O = (2R)-homocitrate + CoA + H(+). It functions in the pathway amino-acid biosynthesis; L-lysine biosynthesis via AAA pathway; L-alpha-aminoadipate from 2-oxoglutarate: step 1/5. Its function is as follows. Catalyzes the aldol-type condensation of 2-oxoglutarate with acetyl-CoA to yield homocitrate. Carries out the first step of the alpha-aminoadipate (AAA) lysine biosynthesis pathway. This Penicillium rubens (strain ATCC 28089 / DSM 1075 / NRRL 1951 / Wisconsin 54-1255) (Penicillium chrysogenum) protein is Homocitrate synthase, mitochondrial (lys1).